We begin with the raw amino-acid sequence, 431 residues long: Glutamate-1-semialdehyde 2,1-aminomutase 1 (431 aa).

At Lys268 the chain carries N6-(pyridoxal phosphate)lysine.

The protein belongs to the class-III pyridoxal-phosphate-dependent aminotransferase family. HemL subfamily. Homodimer. The cofactor is pyridoxal 5'-phosphate.

Its subcellular location is the cytoplasm. The enzyme catalyses (S)-4-amino-5-oxopentanoate = 5-aminolevulinate. It functions in the pathway porphyrin-containing compound metabolism; protoporphyrin-IX biosynthesis; 5-aminolevulinate from L-glutamyl-tRNA(Glu): step 2/2. The protein is Glutamate-1-semialdehyde 2,1-aminomutase 1 of Bacillus pumilus (strain SAFR-032).